The chain runs to 261 residues: [LysW]-aminoadipate/[LysW]-glutamate kinase (261 aa).

Substrate-binding positions include 35 to 36 (GG), Arg62, and Asn166.

This sequence belongs to the acetylglutamate kinase family. LysZ subfamily.

It is found in the cytoplasm. The enzyme catalyses [amino-group carrier protein]-C-terminal-N-(1,4-dicarboxybutan-1-yl)-L-glutamine + ATP = [amino-group carrier protein]-C-terminal-N-(1-carboxy-5-phosphooxy-5-oxopentan-1-yl)-L-glutamine + ADP. It catalyses the reaction [amino-group carrier protein]-C-terminal-gamma-(L-glutamyl)-L-glutamate + ATP = [amino-group carrier protein]-C-terminal-gamma-(5-phospho-L-glutamyl)-L-glutamate + ADP. Its pathway is amino-acid biosynthesis; L-lysine biosynthesis via AAA pathway; L-lysine from L-alpha-aminoadipate (Thermus route): step 2/5. It participates in amino-acid biosynthesis; L-arginine biosynthesis. Its function is as follows. Involved in both the arginine and lysine biosynthetic pathways. Phosphorylates the LysW-bound precursors glutamate (for arginine biosynthesis), respectively alpha-aminoadipate (for lysine biosynthesis). This is [LysW]-aminoadipate/[LysW]-glutamate kinase from Sulfurisphaera tokodaii (strain DSM 16993 / JCM 10545 / NBRC 100140 / 7) (Sulfolobus tokodaii).